Reading from the N-terminus, the 146-residue chain is Hemoglobin subunit beta (146 aa).

At valine 1 the chain carries N-acetylvaline. The region spanning 2-146 (HLSGEEKAAV…VANALAHKYH (145 aa)) is the Globin domain. Threonine 12 carries the post-translational modification Phosphothreonine. Phosphoserine is present on serine 44. Lysine 59 bears the N6-acetyllysine mark. Histidine 63 is a heme b binding site. An N6-acetyllysine modification is found at lysine 82. Residue histidine 92 coordinates heme b. Cysteine 93 carries the S-nitrosocysteine modification. Lysine 144 is modified (N6-acetyllysine).

This sequence belongs to the globin family. In terms of assembly, heterotetramer of two alpha chains and two beta chains. Red blood cells.

In terms of biological role, involved in oxygen transport from the lung to the various peripheral tissues. The sequence is that of Hemoglobin subunit beta (HBB) from Tupaia glis (Common tree shrew).